The chain runs to 247 residues: ATP synthase subunit a, chloroplastic (247 aa).

Helical transmembrane passes span 38–58 (QVLI…TVAV), 95–115 (VPFI…GALL), 134–154 (INTT…AGLT), 199–219 (LVVV…VMFL), and 220–240 (GLFT…AYIG).

The protein belongs to the ATPase A chain family. F-type ATPases have 2 components, CF(1) - the catalytic core - and CF(0) - the membrane proton channel. CF(1) has five subunits: alpha(3), beta(3), gamma(1), delta(1), epsilon(1). CF(0) has four main subunits: a, b, b' and c.

The protein localises to the plastid. It is found in the chloroplast thylakoid membrane. In terms of biological role, key component of the proton channel; it plays a direct role in the translocation of protons across the membrane. The sequence is that of ATP synthase subunit a, chloroplastic from Acorus calamus var. americanus (American sweet flag).